The primary structure comprises 246 residues: tRNA pseudouridine synthase A (246 aa).

Catalysis depends on aspartate 52, which acts as the Nucleophile. Tyrosine 111 is a substrate binding site.

The protein belongs to the tRNA pseudouridine synthase TruA family. In terms of assembly, homodimer.

The enzyme catalyses uridine(38/39/40) in tRNA = pseudouridine(38/39/40) in tRNA. Its function is as follows. Formation of pseudouridine at positions 38, 39 and 40 in the anticodon stem and loop of transfer RNAs. This Rhodopseudomonas palustris (strain BisA53) protein is tRNA pseudouridine synthase A.